A 570-amino-acid chain; its full sequence is Vacuolar protein sorting-associated protein 45 (570 aa).

Phosphoserine is present on residues serine 307 and serine 441.

The protein belongs to the STXBP/unc-18/SEC1 family. As to quaternary structure, interacts with STX6. Interacts with ZFYVE20. As to expression, ubiquitous. Expression was highest in testis, heart and brain, intermediate in kidney, spleen, prostate, ovary, small intestine and thymus and low in lung, skeletal muscle, placenta, colon, pancreas, peripheral blood leukocytes and liver.

Its subcellular location is the golgi apparatus membrane. The protein localises to the endosome membrane. Functionally, may play a role in vesicle-mediated protein trafficking from the Golgi stack through the trans-Golgi network. This chain is Vacuolar protein sorting-associated protein 45 (VPS45), found in Homo sapiens (Human).